The sequence spans 738 residues: Catalase-peroxidase (738 aa).

The N-terminal stretch at 1–24 (MEPLFPKRLLSIAVLCVASATAQA) is a signal peptide. The tryptophyl-tyrosyl-methioninium (Trp-Tyr) (with M-252) cross-link spans 104–226 (WHAAGTYRMI…FGATEMGLIY (123 aa)). H105 functions as the Proton acceptor in the catalytic mechanism. Positions 191-213 (EEVNWGPEGQWLTDRRHSGDRKL) are disordered. Residues 203–213 (TDRRHSGDRKL) show a composition bias toward basic and acidic residues. The segment at residues 226–252 (YVNPEGPHGNPDPIAAAHDIRQAFGRM) is a cross-link (tryptophyl-tyrosyl-methioninium (Tyr-Met) (with W-104)). H267 is a binding site for heme b.

It belongs to the peroxidase family. Peroxidase/catalase subfamily. In terms of assembly, homodimer or homotetramer. Requires heme b as cofactor. Formation of the three residue Trp-Tyr-Met cross-link is important for the catalase, but not the peroxidase activity of the enzyme.

The catalysed reaction is H2O2 + AH2 = A + 2 H2O. It carries out the reaction 2 H2O2 = O2 + 2 H2O. Bifunctional enzyme with both catalase and broad-spectrum peroxidase activity. This is Catalase-peroxidase from Saccharophagus degradans (strain 2-40 / ATCC 43961 / DSM 17024).